The chain runs to 211 residues: Cytochrome c biogenesis ATP-binding export protein CcmA (211 aa).

Positions 8–210 (LEAKNLQCER…EVRRIQLGAV (203 aa)) constitute an ABC transporter domain. 40–47 (GPNGAGKT) serves as a coordination point for ATP.

Belongs to the ABC transporter superfamily. CcmA exporter (TC 3.A.1.107) family. In terms of assembly, the complex is composed of two ATP-binding proteins (CcmA) and two transmembrane proteins (CcmB).

The protein resides in the cell inner membrane. It carries out the reaction heme b(in) + ATP + H2O = heme b(out) + ADP + phosphate + H(+). Its function is as follows. Part of the ABC transporter complex CcmAB involved in the biogenesis of c-type cytochromes; once thought to export heme, this seems not to be the case, but its exact role is uncertain. Responsible for energy coupling to the transport system. This is Cytochrome c biogenesis ATP-binding export protein CcmA from Hahella chejuensis (strain KCTC 2396).